The sequence spans 128 residues: Calcitonin gene-related peptide 1 (128 aa).

An N-terminal signal peptide occupies residues 1–25 (MGFLKFSPFLVVSILLLYQACSLQA). A propeptide spanning residues 26–80 (VPLRSILESSPGMATLSEEEVRLLAALVQDYMQMKARELEQEEEQEAEGSSVTAQ) is cleaved from the precursor. The cysteines at positions 84 and 89 are disulfide-linked. At Phe119 the chain carries Phenylalanine amide. Positions 125–128 (DLQA) are excised as a propeptide.

Belongs to the calcitonin family. As to expression, detected in nerve cells of cerebrum, hippocampus and pons/midbrain in newborns, and only in nerve cells of pons/midbrain in adult.

Its subcellular location is the secreted. Its function is as follows. CGRP1/CALCA is a peptide hormone that induces vasodilation mediated by the CALCRL-RAMP1 receptor complex. Dilates a variety of vessels including the coronary, cerebral and systemic vasculature. Its abundance in the CNS also points toward a neurotransmitter or neuromodulator role. It also elevates platelet cAMP. CGRP1 can also bind and activate CALCR-RAMP1 (AMYR1) receptor complex. This is Calcitonin gene-related peptide 1 from Mus musculus (Mouse).